Here is a 326-residue protein sequence, read N- to C-terminus: Beta-ketoacyl-[acyl-carrier-protein] synthase III (326 aa).

Catalysis depends on residues cysteine 111 and histidine 252. Positions 253 to 257 (QANIR) are ACP-binding. Asparagine 282 is a catalytic residue.

Belongs to the thiolase-like superfamily. FabH family. Homodimer.

The protein localises to the plastid. Its subcellular location is the chloroplast. It carries out the reaction malonyl-[ACP] + acetyl-CoA + H(+) = 3-oxobutanoyl-[ACP] + CO2 + CoA. The protein operates within lipid metabolism; fatty acid biosynthesis. Functionally, catalyzes the condensation reaction of fatty acid synthesis by the addition to an acyl acceptor of two carbons from malonyl-ACP. Catalyzes the first condensation reaction which initiates fatty acid synthesis and may therefore play a role in governing the total rate of fatty acid production. Possesses both acetoacetyl-ACP synthase and acetyl transacylase activities. Its substrate specificity determines the biosynthesis of branched-chain and/or straight-chain of fatty acids. The sequence is that of Beta-ketoacyl-[acyl-carrier-protein] synthase III from Porphyra purpurea (Red seaweed).